The primary structure comprises 367 residues: Beta sliding clamp (367 aa).

The protein belongs to the beta sliding clamp family. In terms of assembly, forms a ring-shaped head-to-tail homodimer around DNA which binds and tethers DNA polymerases and other proteins to the DNA. The DNA replisome complex has a single clamp-loading complex (3 tau and 1 each of delta, delta', psi and chi subunits) which binds 3 Pol III cores (1 core on the leading strand and 2 on the lagging strand) each with a beta sliding clamp dimer. Additional proteins in the replisome are other copies of gamma, psi and chi, Ssb, DNA helicase and RNA primase.

Its subcellular location is the cytoplasm. Its function is as follows. Confers DNA tethering and processivity to DNA polymerases and other proteins. Acts as a clamp, forming a ring around DNA (a reaction catalyzed by the clamp-loading complex) which diffuses in an ATP-independent manner freely and bidirectionally along dsDNA. Initially characterized for its ability to contact the catalytic subunit of DNA polymerase III (Pol III), a complex, multichain enzyme responsible for most of the replicative synthesis in bacteria; Pol III exhibits 3'-5' exonuclease proofreading activity. The beta chain is required for initiation of replication as well as for processivity of DNA replication. The sequence is that of Beta sliding clamp (dnaN) from Proteus mirabilis.